We begin with the raw amino-acid sequence, 371 residues long: Cytochrome b (371 aa).

4 helical membrane passes run V32–W52, F76–F98, V113–V133, and L179–F199. Heme b contacts are provided by H82 and H96. The heme b site is built by H183 and H197. H202 is an a ubiquinone binding site. 4 helical membrane-spanning segments follow: residues F227–F247, L296–V316, L329–Y349, and P350–L370.

The protein belongs to the cytochrome b family. The main subunits of complex b-c1 are: cytochrome b, cytochrome c1 and the Rieske protein. Heme b serves as cofactor.

Its subcellular location is the mitochondrion inner membrane. In terms of biological role, component of the ubiquinol-cytochrome c reductase complex (complex III or cytochrome b-c1 complex) that is part of the mitochondrial respiratory chain. The b-c1 complex mediates electron transfer from ubiquinol to cytochrome c. Contributes to the generation of a proton gradient across the mitochondrial membrane that is then used for ATP synthesis. The protein is Cytochrome b (MT-CYB) of Leishmania tarentolae (Sauroleishmania tarentolae).